A 261-amino-acid chain; its full sequence is Cytochrome c oxidase subunit 3 (261 aa).

Over 1-15 the chain is Mitochondrial matrix; the sequence is MTHQLHQYHLVDPSP. A helical transmembrane segment spans residues 16–34; that stretch reads WPLTGAMGSLLLASGLAVW. At 35–40 the chain is on the mitochondrial intermembrane side; the sequence is FHTNNT. A helical membrane pass occupies residues 41–66; the sequence is MLLKFGLLTLLLTMFQWWRDIIREST. Topologically, residues 67 to 72 are mitochondrial matrix; it reads YQGHHT. The helical transmembrane segment at 73 to 105 threads the bilayer; sequence SGVQKNMRYGMILFITSEVFFFLGFFWALYHVS. Residues 106-128 lie on the Mitochondrial intermembrane side of the membrane; it reads LVPTPELGAEWPPIGITPLNPME. Residues 129–152 traverse the membrane as a helical segment; it reads VPLLNTAVLLSSGATITWSHHTMM. The Mitochondrial matrix portion of the chain corresponds to 153-155; the sequence is KGN. Residues 156–183 form a helical membrane-spanning segment; sequence KKEATHALMLTIILGAYFTALQLSEYME. At 184 to 190 the chain is on the mitochondrial intermembrane side; it reads TPFTIAD. A helical transmembrane segment spans residues 191–223; the sequence is SVYGSLFFVATGFHGLHVMIGTSFLMVCALRLA. The Mitochondrial matrix portion of the chain corresponds to 224–232; it reads KHHFTITHH. Residues 233–256 form a helical membrane-spanning segment; that stretch reads FGYEAAIWYWHFVDIVWLFLYISV. At 257 to 261 the chain is on the mitochondrial intermembrane side; that stretch reads YWWGS.

This sequence belongs to the cytochrome c oxidase subunit 3 family. As to quaternary structure, component of the cytochrome c oxidase (complex IV, CIV), a multisubunit enzyme composed of 14 subunits. The complex is composed of a catalytic core of 3 subunits MT-CO1, MT-CO2 and MT-CO3, encoded in the mitochondrial DNA, and 11 supernumerary subunits COX4I, COX5A, COX5B, COX6A, COX6B, COX6C, COX7A, COX7B, COX7C, COX8 and NDUFA4, which are encoded in the nuclear genome. The complex exists as a monomer or a dimer and forms supercomplexes (SCs) in the inner mitochondrial membrane with NADH-ubiquinone oxidoreductase (complex I, CI) and ubiquinol-cytochrome c oxidoreductase (cytochrome b-c1 complex, complex III, CIII), resulting in different assemblies (supercomplex SCI(1)III(2)IV(1) and megacomplex MCI(2)III(2)IV(2)).

Its subcellular location is the mitochondrion inner membrane. It catalyses the reaction 4 Fe(II)-[cytochrome c] + O2 + 8 H(+)(in) = 4 Fe(III)-[cytochrome c] + 2 H2O + 4 H(+)(out). Its function is as follows. Component of the cytochrome c oxidase, the last enzyme in the mitochondrial electron transport chain which drives oxidative phosphorylation. The respiratory chain contains 3 multisubunit complexes succinate dehydrogenase (complex II, CII), ubiquinol-cytochrome c oxidoreductase (cytochrome b-c1 complex, complex III, CIII) and cytochrome c oxidase (complex IV, CIV), that cooperate to transfer electrons derived from NADH and succinate to molecular oxygen, creating an electrochemical gradient over the inner membrane that drives transmembrane transport and the ATP synthase. Cytochrome c oxidase is the component of the respiratory chain that catalyzes the reduction of oxygen to water. Electrons originating from reduced cytochrome c in the intermembrane space (IMS) are transferred via the dinuclear copper A center (CU(A)) of subunit 2 and heme A of subunit 1 to the active site in subunit 1, a binuclear center (BNC) formed by heme A3 and copper B (CU(B)). The BNC reduces molecular oxygen to 2 water molecules using 4 electrons from cytochrome c in the IMS and 4 protons from the mitochondrial matrix. The chain is Cytochrome c oxidase subunit 3 (MT-CO3) from Lycodon semicarinatus (Ryukyu odd-tooth snake).